The sequence spans 90 residues: Small ribosomal subunit protein uS19 (90 aa).

Belongs to the universal ribosomal protein uS19 family.

Protein S19 forms a complex with S13 that binds strongly to the 16S ribosomal RNA. The polypeptide is Small ribosomal subunit protein uS19 (Rhizorhabdus wittichii (strain DSM 6014 / CCUG 31198 / JCM 15750 / NBRC 105917 / EY 4224 / RW1) (Sphingomonas wittichii)).